A 215-amino-acid chain; its full sequence is S-crystallin 2 (215 aa).

One can recognise a GST N-terminal domain in the interval 2–80 (PSYTLNYFNH…YLAREFGFHG (79 aa)). In terms of domain architecture, GST C-terminal spans 82 to 215 (NNMEMARVEY…YLKKRSSTEF (134 aa)).

The protein belongs to the GST superfamily. As to expression, lens.

Its function is as follows. S-crystallins are structural components of squids and octopi eye lens. Contains relatively little if any GST activity. In Enteroctopus dofleini (North Pacific giant octopus), this protein is S-crystallin 2.